Consider the following 245-residue polypeptide: Intron-associated endonuclease 1 (245 aa).

Residues 1–88 (MKSGIYQIKN…IKELNSKING (88 aa)) form the GIY-YIG domain.

This sequence to endonucleases of group I introns of fungi and phage. Mg(2+) serves as cofactor.

This endonuclease is specific to the thymidylate synthase (td) gene splice junction and is involved in intron homing. This Enterobacteria phage T4 (Bacteriophage T4) protein is Intron-associated endonuclease 1 (ITEVIR).